The sequence spans 350 residues: Ornithine carbamoyltransferase, mitochondrial (350 aa).

The transit peptide at 1–30 (MLHHMRTIINASWRYGNKCIVRQFGFSQTY) directs the protein to the mitochondrion. Residues 86 to 90 (STRTR), Arg-137, and His-164 each bind carbamoyl phosphate. Arg-137 lines the L-ornithine pocket. L-ornithine-binding positions include Asn-195, 259-263 (DTWVS), 298-301 (HCLP), and Arg-326. Cys-299 is an active-site residue. Residue Arg-326 coordinates carbamoyl phosphate.

Belongs to the aspartate/ornithine carbamoyltransferase superfamily. OTCase family. As to quaternary structure, homotrimer. Liver.

The protein resides in the mitochondrion matrix. It carries out the reaction carbamoyl phosphate + L-ornithine = L-citrulline + phosphate + H(+). The protein operates within nitrogen metabolism; urea cycle; L-citrulline from L-ornithine and carbamoyl phosphate: step 1/1. Functionally, OTC is necessary for the tadpoles transition from an ammonotelic, aquatic larva to a ureotelic, terrestrial adult. The protein is Ornithine carbamoyltransferase, mitochondrial of Aquarana catesbeiana (American bullfrog).